The chain runs to 344 residues: Serpentine receptor class alpha-27 (344 aa).

7 consecutive transmembrane segments (helical) span residues serine 28–leucine 48, glutamine 67–isoleucine 87, glycine 128–valine 148, methionine 157–valine 177, alanine 203–isoleucine 223, isoleucine 252–isoleucine 272, and isoleucine 287–tyrosine 307.

Belongs to the nematode receptor-like protein sra family.

Its subcellular location is the membrane. This is Serpentine receptor class alpha-27 (sra-27) from Caenorhabditis elegans.